The following is a 721-amino-acid chain: Polyribonucleotide nucleotidyltransferase (721 aa).

Positions 486 and 492 each coordinate Mg(2+). Residues Pro-553–Ile-612 enclose the KH domain. The S1 motif domain occupies Gly-622–Val-716.

This sequence belongs to the polyribonucleotide nucleotidyltransferase family. It depends on Mg(2+) as a cofactor.

It is found in the cytoplasm. It catalyses the reaction RNA(n+1) + phosphate = RNA(n) + a ribonucleoside 5'-diphosphate. Functionally, involved in mRNA degradation. Catalyzes the phosphorolysis of single-stranded polyribonucleotides processively in the 3'- to 5'-direction. The sequence is that of Polyribonucleotide nucleotidyltransferase from Borrelia garinii subsp. bavariensis (strain ATCC BAA-2496 / DSM 23469 / PBi) (Borreliella bavariensis).